A 445-amino-acid polypeptide reads, in one-letter code: Putative transcription factor bHLH056 (445 aa).

3 disordered regions span residues asparagine 36 to leucine 70, glutamine 224 to histidine 260, and proline 365 to alanine 445. Positions serine 231–arginine 246 are enriched in basic and acidic residues. The 50-residue stretch at arginine 255 to leucine 304 folds into the bHLH domain. Over residues glutamine 418–serine 433 the composition is skewed to low complexity.

As to quaternary structure, homodimer.

The protein localises to the nucleus. This is Putative transcription factor bHLH056 (BHLH56) from Arabidopsis thaliana (Mouse-ear cress).